Here is a 231-residue protein sequence, read N- to C-terminus: Flagellar L-ring protein (231 aa).

A signal peptide spans 1 to 18; that stretch reads MKRFVSVVALSGVVSLAG. Cys19 carries the N-palmitoyl cysteine lipid modification. A lipid anchor (S-diacylglycerol cysteine) is attached at Cys19.

Belongs to the FlgH family. As to quaternary structure, the basal body constitutes a major portion of the flagellar organelle and consists of four rings (L,P,S, and M) mounted on a central rod.

It is found in the cell outer membrane. It localises to the bacterial flagellum basal body. In terms of biological role, assembles around the rod to form the L-ring and probably protects the motor/basal body from shearing forces during rotation. This is Flagellar L-ring protein from Pseudomonas fluorescens (strain Pf0-1).